The following is a 360-amino-acid chain: Phospho-N-acetylmuramoyl-pentapeptide-transferase (360 aa).

10 consecutive transmembrane segments (helical) span residues 21-41 (YITVRAILALLTALLVSLWIG), 73-93 (TMGGVMILFAITVSTLLWANL), 94-114 (ANPYVWFSLFVLLGYGAIGFV), 132-152 (WKYFWLSVIALVAAFGMYAIG), 168-188 (IMPQLGLFYIILTYFVIVGTS), 199-219 (GLAIMPTVLVAGAFALIAWAT), 235-255 (FSAELVVFCTAIVGAGLGFLW), 263-283 (VFMGDVGSLALGGALGVVAVL), 288-308 (FLLVIMGGVFVVETLSVILQV), and 338-358 (VIVRFWIISLMLVLVGLVTLK).

It belongs to the glycosyltransferase 4 family. MraY subfamily. Mg(2+) serves as cofactor.

The protein resides in the cell inner membrane. It carries out the reaction UDP-N-acetyl-alpha-D-muramoyl-L-alanyl-gamma-D-glutamyl-meso-2,6-diaminopimeloyl-D-alanyl-D-alanine + di-trans,octa-cis-undecaprenyl phosphate = di-trans,octa-cis-undecaprenyl diphospho-N-acetyl-alpha-D-muramoyl-L-alanyl-D-glutamyl-meso-2,6-diaminopimeloyl-D-alanyl-D-alanine + UMP. Its pathway is cell wall biogenesis; peptidoglycan biosynthesis. In terms of biological role, catalyzes the initial step of the lipid cycle reactions in the biosynthesis of the cell wall peptidoglycan: transfers peptidoglycan precursor phospho-MurNAc-pentapeptide from UDP-MurNAc-pentapeptide onto the lipid carrier undecaprenyl phosphate, yielding undecaprenyl-pyrophosphoryl-MurNAc-pentapeptide, known as lipid I. The protein is Phospho-N-acetylmuramoyl-pentapeptide-transferase of Pasteurella multocida (strain Pm70).